Here is a 131-residue protein sequence, read N- to C-terminus: uncharacterized protein (131 aa).

The CMP/dCMP-type deaminase domain occupies 1-116 (MYMARMLSEM…EMLEASSIQC (116 aa)).

This is an uncharacterized protein from Caenorhabditis elegans.